A 273-amino-acid polypeptide reads, in one-letter code: Glutamate 5-kinase (273 aa).

Lys15 is an ATP binding site. The substrate site is built by Ser55, Asp142, and Asn158. ATP contacts are provided by residues 178 to 179 and 220 to 226; these read SD and TGGMLSK.

It belongs to the glutamate 5-kinase family.

Its subcellular location is the cytoplasm. It catalyses the reaction L-glutamate + ATP = L-glutamyl 5-phosphate + ADP. It functions in the pathway amino-acid biosynthesis; L-proline biosynthesis; L-glutamate 5-semialdehyde from L-glutamate: step 1/2. Its function is as follows. Catalyzes the transfer of a phosphate group to glutamate to form L-glutamate 5-phosphate. The chain is Glutamate 5-kinase from Streptococcus pyogenes serotype M49 (strain NZ131).